The following is a 325-amino-acid chain: Lipoyl synthase (325 aa).

Residues Met1–Pro32 form a disordered region. Positions Ala19–Pro32 are enriched in basic and acidic residues. Residues Cys66, Cys71, Cys77, Cys92, Cys96, Cys99, and Ser305 each contribute to the [4Fe-4S] cluster site. Positions Trp78–Leu294 constitute a Radical SAM core domain.

It belongs to the radical SAM superfamily. Lipoyl synthase family. [4Fe-4S] cluster is required as a cofactor.

Its subcellular location is the cytoplasm. It carries out the reaction [[Fe-S] cluster scaffold protein carrying a second [4Fe-4S](2+) cluster] + N(6)-octanoyl-L-lysyl-[protein] + 2 oxidized [2Fe-2S]-[ferredoxin] + 2 S-adenosyl-L-methionine + 4 H(+) = [[Fe-S] cluster scaffold protein] + N(6)-[(R)-dihydrolipoyl]-L-lysyl-[protein] + 4 Fe(3+) + 2 hydrogen sulfide + 2 5'-deoxyadenosine + 2 L-methionine + 2 reduced [2Fe-2S]-[ferredoxin]. It functions in the pathway protein modification; protein lipoylation via endogenous pathway; protein N(6)-(lipoyl)lysine from octanoyl-[acyl-carrier-protein]: step 2/2. Functionally, catalyzes the radical-mediated insertion of two sulfur atoms into the C-6 and C-8 positions of the octanoyl moiety bound to the lipoyl domains of lipoate-dependent enzymes, thereby converting the octanoylated domains into lipoylated derivatives. This chain is Lipoyl synthase, found in Beijerinckia indica subsp. indica (strain ATCC 9039 / DSM 1715 / NCIMB 8712).